We begin with the raw amino-acid sequence, 490 residues long: Probable glycine dehydrogenase (decarboxylating) subunit 2 (490 aa).

Lys-273 is subject to N6-(pyridoxal phosphate)lysine.

This sequence belongs to the GcvP family. C-terminal subunit subfamily. The glycine cleavage system is composed of four proteins: P, T, L and H. In this organism, the P 'protein' is a heterodimer of two subunits. It depends on pyridoxal 5'-phosphate as a cofactor.

It carries out the reaction N(6)-[(R)-lipoyl]-L-lysyl-[glycine-cleavage complex H protein] + glycine + H(+) = N(6)-[(R)-S(8)-aminomethyldihydrolipoyl]-L-lysyl-[glycine-cleavage complex H protein] + CO2. Its function is as follows. The glycine cleavage system catalyzes the degradation of glycine. The P protein binds the alpha-amino group of glycine through its pyridoxal phosphate cofactor; CO(2) is released and the remaining methylamine moiety is then transferred to the lipoamide cofactor of the H protein. The chain is Probable glycine dehydrogenase (decarboxylating) subunit 2 from Staphylococcus aureus (strain Newman).